Reading from the N-terminus, the 172-residue chain is Ribosome maturation factor RimM (172 aa).

The region spanning Asp95–Leu168 is the PRC barrel domain.

The protein belongs to the RimM family. Binds ribosomal protein uS19.

Its subcellular location is the cytoplasm. In terms of biological role, an accessory protein needed during the final step in the assembly of 30S ribosomal subunit, possibly for assembly of the head region. Essential for efficient processing of 16S rRNA. May be needed both before and after RbfA during the maturation of 16S rRNA. It has affinity for free ribosomal 30S subunits but not for 70S ribosomes. The sequence is that of Ribosome maturation factor RimM from Streptococcus uberis (strain ATCC BAA-854 / 0140J).